A 397-amino-acid chain; its full sequence is LIM/homeobox protein Lhx9 (397 aa).

2 consecutive LIM zinc-binding domains span residues Ala-69 to Val-130 and Gln-131 to Gly-193. 2 disordered regions span residues Glu-248–Thr-272 and Glu-330–Asp-364. Residues Thr-267–Leu-326 constitute a DNA-binding region (homeobox).

As to quaternary structure, interacts with LDB1 and LDB2.

The protein resides in the nucleus. Functionally, involved in gonadal development. The polypeptide is LIM/homeobox protein Lhx9 (LHX9) (Bos taurus (Bovine)).